Reading from the N-terminus, the 54-residue chain is Small ribosomal subunit protein uS14 (54 aa).

Zn(2+) contacts are provided by Cys19, Cys22, Cys37, and Cys40.

It belongs to the universal ribosomal protein uS14 family. Zinc-binding uS14 subfamily. Part of the 30S ribosomal subunit. Zn(2+) is required as a cofactor.

Binds 16S rRNA, required for the assembly of 30S particles. In Pyrobaculum aerophilum (strain ATCC 51768 / DSM 7523 / JCM 9630 / CIP 104966 / NBRC 100827 / IM2), this protein is Small ribosomal subunit protein uS14.